The following is a 262-amino-acid chain: tRNA pseudouridine synthase A (262 aa).

Catalysis depends on Asp-52, which acts as the Nucleophile. Tyr-103 contributes to the substrate binding site.

Belongs to the tRNA pseudouridine synthase TruA family.

It carries out the reaction uridine(38/39/40) in tRNA = pseudouridine(38/39/40) in tRNA. Functionally, formation of pseudouridine at positions 38, 39 and 40 in the anticodon stem and loop of transfer RNAs. The chain is tRNA pseudouridine synthase A from Methanococcus maripaludis (strain DSM 14266 / JCM 13030 / NBRC 101832 / S2 / LL).